Here is a 501-residue protein sequence, read N- to C-terminus: ATP synthase subunit alpha (501 aa).

ATP is bound at residue 169-176 (GDRQTGKT).

Belongs to the ATPase alpha/beta chains family. As to quaternary structure, F-type ATPases have 2 components, CF(1) - the catalytic core - and CF(0) - the membrane proton channel. CF(1) has five subunits: alpha(3), beta(3), gamma(1), delta(1), epsilon(1). CF(0) has three main subunits: a(1), b(2) and c(9-12). The alpha and beta chains form an alternating ring which encloses part of the gamma chain. CF(1) is attached to CF(0) by a central stalk formed by the gamma and epsilon chains, while a peripheral stalk is formed by the delta and b chains.

It is found in the cell membrane. The catalysed reaction is ATP + H2O + 4 H(+)(in) = ADP + phosphate + 5 H(+)(out). Functionally, produces ATP from ADP in the presence of a proton gradient across the membrane. The alpha chain is a regulatory subunit. The polypeptide is ATP synthase subunit alpha (Streptococcus pneumoniae (strain 70585)).